A 440-amino-acid chain; its full sequence is Chromosomal replication initiator protein DnaA (440 aa).

The domain I, interacts with DnaA modulators stretch occupies residues Met-1–Arg-72. The interval Arg-72–Thr-103 is domain II. The segment at Pro-104–Ala-320 is domain III, AAA+ region. ATP-binding residues include Gly-148, Gly-150, Lys-151, and Thr-152. Residues Asn-321 to Ser-440 form a domain IV, binds dsDNA region.

Belongs to the DnaA family. Oligomerizes as a right-handed, spiral filament on DNA at oriC.

The protein resides in the cytoplasm. Functionally, plays an essential role in the initiation and regulation of chromosomal replication. ATP-DnaA binds to the origin of replication (oriC) to initiate formation of the DNA replication initiation complex once per cell cycle. Binds the DnaA box (a 9 base pair repeat at the origin) and separates the double-stranded (ds)DNA. Forms a right-handed helical filament on oriC DNA; dsDNA binds to the exterior of the filament while single-stranded (ss)DNA is stabiized in the filament's interior. The ATP-DnaA-oriC complex binds and stabilizes one strand of the AT-rich DNA unwinding element (DUE), permitting loading of DNA polymerase. After initiation quickly degrades to an ADP-DnaA complex that is not apt for DNA replication. Binds acidic phospholipids. This Limosilactobacillus reuteri (strain DSM 20016) (Lactobacillus reuteri) protein is Chromosomal replication initiator protein DnaA.